The chain runs to 365 residues: Uroporphyrinogen decarboxylase (365 aa).

Substrate contacts are provided by residues 27-31 (RQAGR), Asp77, Tyr154, Thr209, and His327.

Belongs to the uroporphyrinogen decarboxylase family. In terms of assembly, homodimer.

Its subcellular location is the cytoplasm. It carries out the reaction uroporphyrinogen III + 4 H(+) = coproporphyrinogen III + 4 CO2. It functions in the pathway porphyrin-containing compound metabolism; protoporphyrin-IX biosynthesis; coproporphyrinogen-III from 5-aminolevulinate: step 4/4. In terms of biological role, catalyzes the decarboxylation of four acetate groups of uroporphyrinogen-III to yield coproporphyrinogen-III. This Nitrosospira multiformis (strain ATCC 25196 / NCIMB 11849 / C 71) protein is Uroporphyrinogen decarboxylase.